Reading from the N-terminus, the 507-residue chain is Probable Xaa-Pro aminopeptidase HCBG_01484 (507 aa).

Mn(2+)-binding residues include D283, D294, E431, and E469.

Belongs to the peptidase M24B family. Mn(2+) serves as cofactor.

It carries out the reaction Release of any N-terminal amino acid, including proline, that is linked to proline, even from a dipeptide or tripeptide.. Functionally, catalyzes the removal of a penultimate prolyl residue from the N-termini of peptides. This chain is Probable Xaa-Pro aminopeptidase HCBG_01484, found in Ajellomyces capsulatus (strain G186AR / H82 / ATCC MYA-2454 / RMSCC 2432) (Darling's disease fungus).